Reading from the N-terminus, the 249-residue chain is MDFLTEVKRTVELRLATEPPPPARSLPLVDFIKSLGEFGIIAEYKRASPRGVIRLDLPPWAYFAQVYQYASAFSVLTEPFWFLGDYRFIPIAKAFKPVLMKDFVIDKRQIEAAYGYGADAVLIIYRLVERERAMELAEYAQRLGLTPVVEIDNVQDAKEVATWGGRLVIGINSRDLKTLETNVQRAFEVAKALRGDVEFIIESGLSRPEEVERACSLYARGVLIGTALMKNPVLVKELRQVAERCIARR.

Belongs to the TrpC family.

It catalyses the reaction 1-(2-carboxyphenylamino)-1-deoxy-D-ribulose 5-phosphate + H(+) = (1S,2R)-1-C-(indol-3-yl)glycerol 3-phosphate + CO2 + H2O. It functions in the pathway amino-acid biosynthesis; L-tryptophan biosynthesis; L-tryptophan from chorismate: step 4/5. The polypeptide is Indole-3-glycerol phosphate synthase (Pyrobaculum aerophilum (strain ATCC 51768 / DSM 7523 / JCM 9630 / CIP 104966 / NBRC 100827 / IM2)).